The sequence spans 385 residues: Cellulase CelDZ1 (385 aa).

Residues 6–26 traverse the membrane as a helical segment; that stretch reads INKWYFFVGMLVIFAVIISLI. Substrate-binding positions include H87, 91-92, Y118, and H153; that span reads WF. Catalysis depends on E192, which acts as the Proton donor. Y261 serves as a coordination point for substrate. The active-site Nucleophile is E294. Substrate-binding positions include 300 to 301, W328, and 333 to 335; these read AS and KNE.

The protein belongs to the glycosyl hydrolase 5 (cellulase A) family. In terms of assembly, monomer.

Its subcellular location is the cell membrane. The enzyme catalyses Endohydrolysis of (1-&gt;4)-beta-D-glucosidic linkages in cellulose, lichenin and cereal beta-D-glucans.. With respect to regulation, activity is enhanced by 1mM Mn(2+), but is not affected by 1mM Ca(2+), Mg(2+), Zn(2+), K(+), Na(+) or Li(+). Activity is not inhibited by EDTA (in vitro). Functionally, thermostable endoglucanase that has high activity with soluble polymeric substrates containing beta-1,4-glycosidic bonds, such as carboxymethyl cellulose (CMC) and barley beta-D-glucan (in vitro). Has no activity with cellobiose and filter paper. Has no activity with substrates containing beta-1,3-linked glycans, such as laminarin. Likewise, lacks activity with xylan, galactomannan and pectin. The protein is Cellulase CelDZ1 of Thermoanaerobacterium sp.